We begin with the raw amino-acid sequence, 1022 residues long: Collagen alpha-2(VI) chain (1022 aa).

The first 27 residues, M1–A27, serve as a signal peptide directing secretion. The nonhelical region stretch occupies residues Q28–A255. The 125-residue stretch at P44–S168 folds into the VWFA 1 domain. N141 and N215 each carry an N-linked (GlcNAc...) asparagine glycan. Positions G256–T590 are triple-helical region. Residues Y263–P587 are disordered. The span at D287–P299 shows a compositional bias: low complexity. The span at K306–R318 shows a compositional bias: basic and acidic residues. N327 carries an N-linked (GlcNAc...) asparagine glycan. Short sequence motifs (cell attachment site) lie at residues R348–D350 and R366–D368. Over residues Q363–R377 the composition is skewed to basic and acidic residues. Positions E389 to P399 are enriched in low complexity. Short sequence motifs (cell attachment site) lie at residues R426–D428, R444–D446, R465–D467, R489–D491, and R498–D500. The tract at residues G514–G519 is interruption in collagenous region. Gly residues predominate over residues G534–G543. The nonhelical region stretch occupies residues D591–C1022. VWFA domains are found at residues A613–R738 and D833–S957. N-linked (GlcNAc...) asparagine glycans are attached at residues N630 and N897.

The protein belongs to the type VI collagen family. As to quaternary structure, trimers composed of three different chains: alpha 1(VI), alpha 2(VI), and alpha 3(VI). Prolines at the third position of the tripeptide repeating unit (G-X-Y) are hydroxylated in some or all of the chains.

The protein localises to the secreted. The protein resides in the extracellular space. Its subcellular location is the extracellular matrix. Its function is as follows. Collagen VI acts as a cell-binding protein. The protein is Collagen alpha-2(VI) chain (COL6A2) of Gallus gallus (Chicken).